A 535-amino-acid chain; its full sequence is NEDD8-activating enzyme E1 regulatory subunit (535 aa).

An interaction with UBA3 region spans residues 332-345; the sequence is DMIADSSKFIKLQN.

The protein belongs to the ubiquitin-activating E1 family. ULA1 subfamily. In terms of assembly, heterodimer of UBA3 and NAE1. The complex binds NEDD8 and UBE2M.

Its pathway is protein modification; protein neddylation. Functionally, regulatory subunit of the dimeric UBA3-NAE1 E1 enzyme. E1 activates NEDD8 by first adenylating its C-terminal glycine residue with ATP, thereafter linking this residue to the side chain of the catalytic cysteine, yielding a NEDD8-UBA3 thioester and free AMP. E1 finally transfers NEDD8 to the catalytic cysteine of UBE2M. The covalent attachment of NEDD8 to target proteins is known as 'neddylation' and the process is involved in the regulation of cell growth, viability and development. The polypeptide is NEDD8-activating enzyme E1 regulatory subunit (NAE1) (Gallus gallus (Chicken)).